Here is a 193-residue protein sequence, read N- to C-terminus: Auxin-induced protein 22D (193 aa).

The disordered stretch occupies residues Ala-16–Lys-68. Positions Leu-19–Leu-23 match the EAR-like (transcriptional repression) motif. One can recognise a PB1 domain in the interval Gly-97–Gly-184.

It belongs to the Aux/IAA family. Homodimers and heterodimers.

It localises to the nucleus. Its function is as follows. Aux/IAA proteins are short-lived transcriptional factors that function as repressors of early auxin response genes at low auxin concentrations. Repression is thought to result from the interaction with auxin response factors (ARFs), proteins that bind to the auxin-responsive promoter element (AuxRE). Formation of heterodimers with ARF proteins may alter their ability to modulate early auxin response genes expression. The chain is Auxin-induced protein 22D (AUX22D) from Vigna radiata var. radiata (Mung bean).